The primary structure comprises 254 residues: Zinc import ATP-binding protein ZnuC (254 aa).

Positions 5–219 constitute an ABC transporter domain; the sequence is VELKEVCLSF…PEFARLFGRP (215 aa). ATP is bound at residue 37–44; the sequence is GPNGAGKS. The span at 233–242 shows a compositional bias: basic and acidic residues; that stretch reads CDGEHHHHEP. The segment at 233–254 is disordered; that stretch reads CDGEHHHHEPQVPVIRLPSRNQ.

It belongs to the ABC transporter superfamily. Zinc importer (TC 3.A.1.15.5) family. The complex is composed of two ATP-binding proteins (ZnuC), two transmembrane proteins (ZnuB) and a solute-binding protein (ZnuA).

The protein resides in the cell inner membrane. It carries out the reaction Zn(2+)(out) + ATP(in) + H2O(in) = Zn(2+)(in) + ADP(in) + phosphate(in) + H(+)(in). In terms of biological role, part of the ABC transporter complex ZnuABC involved in zinc import. Responsible for energy coupling to the transport system. The protein is Zinc import ATP-binding protein ZnuC of Aeromonas hydrophila subsp. hydrophila (strain ATCC 7966 / DSM 30187 / BCRC 13018 / CCUG 14551 / JCM 1027 / KCTC 2358 / NCIMB 9240 / NCTC 8049).